Consider the following 212-residue polypeptide: Stage 0 sporulation protein A (212 aa).

Residues 5–123 (EVLLADDNRE…VLAQRIRQII (119 aa)) form the Response regulatory domain. Asp10, Asp11, and Asp56 together coordinate Ca(2+). Asp56 carries the 4-aspartylphosphate modification. The segment at residues 194 to 212 (PDIAKKFNTTASHVERAIR) is a DNA-binding region (H-T-H motif).

It depends on Ca(2+) as a cofactor. Post-translationally, phosphorylated by KinA and KinB.

The protein localises to the cytoplasm. Its function is as follows. May play the central regulatory role in sporulation. It may be an element of the effector pathway responsible for the activation of sporulation genes in response to nutritional stress. Spo0A may act in concert with Spo0H (a sigma factor) to control the expression of some genes that are critical to the sporulation process. Repressor of abrB, activator of the spoIIa operon. Binds the DNA sequence 5'-TGNCGAA-3' (0A box). The sequence is that of Stage 0 sporulation protein A (spo0A) from Brevibacillus parabrevis.